The primary structure comprises 400 residues: Tryptophan synthase beta chain (400 aa).

Lys92 bears the N6-(pyridoxal phosphate)lysine mark.

This sequence belongs to the TrpB family. As to quaternary structure, tetramer of two alpha and two beta chains. The cofactor is pyridoxal 5'-phosphate.

It carries out the reaction (1S,2R)-1-C-(indol-3-yl)glycerol 3-phosphate + L-serine = D-glyceraldehyde 3-phosphate + L-tryptophan + H2O. Its pathway is amino-acid biosynthesis; L-tryptophan biosynthesis; L-tryptophan from chorismate: step 5/5. The beta subunit is responsible for the synthesis of L-tryptophan from indole and L-serine. This chain is Tryptophan synthase beta chain, found in Neisseria meningitidis serogroup B (strain ATCC BAA-335 / MC58).